The primary structure comprises 352 residues: Holliday junction branch migration complex subunit RuvB (352 aa).

The large ATPase domain (RuvB-L) stretch occupies residues 13-201; the sequence is FSFRKKELRL…FGISQKIEFY (189 aa). Residues R41, G82, K85, T86, T87, 148 to 150, R191, Y201, and R238 each bind ATP; that span reads EDF. Residue T86 coordinates Mg(2+). A small ATPAse domain (RuvB-S) region spans residues 202-273; it reads TCDELKQIIV…LIKKALNSYQ (72 aa). The tract at residues 276-352 is head domain (RuvB-H); the sequence is EKGLDSLDRH…KYIDSKDDNF (77 aa). Positions 330 and 335 each coordinate DNA.

This sequence belongs to the RuvB family. As to quaternary structure, homohexamer. Forms an RuvA(8)-RuvB(12)-Holliday junction (HJ) complex. HJ DNA is sandwiched between 2 RuvA tetramers; dsDNA enters through RuvA and exits via RuvB. An RuvB hexamer assembles on each DNA strand where it exits the tetramer. Each RuvB hexamer is contacted by two RuvA subunits (via domain III) on 2 adjacent RuvB subunits; this complex drives branch migration. In the full resolvosome a probable DNA-RuvA(4)-RuvB(12)-RuvC(2) complex forms which resolves the HJ.

Its subcellular location is the cytoplasm. It catalyses the reaction ATP + H2O = ADP + phosphate + H(+). In terms of biological role, the RuvA-RuvB-RuvC complex processes Holliday junction (HJ) DNA during genetic recombination and DNA repair, while the RuvA-RuvB complex plays an important role in the rescue of blocked DNA replication forks via replication fork reversal (RFR). RuvA specifically binds to HJ cruciform DNA, conferring on it an open structure. The RuvB hexamer acts as an ATP-dependent pump, pulling dsDNA into and through the RuvAB complex. RuvB forms 2 homohexamers on either side of HJ DNA bound by 1 or 2 RuvA tetramers; 4 subunits per hexamer contact DNA at a time. Coordinated motions by a converter formed by DNA-disengaged RuvB subunits stimulates ATP hydrolysis and nucleotide exchange. Immobilization of the converter enables RuvB to convert the ATP-contained energy into a lever motion, pulling 2 nucleotides of DNA out of the RuvA tetramer per ATP hydrolyzed, thus driving DNA branch migration. The RuvB motors rotate together with the DNA substrate, which together with the progressing nucleotide cycle form the mechanistic basis for DNA recombination by continuous HJ branch migration. Branch migration allows RuvC to scan DNA until it finds its consensus sequence, where it cleaves and resolves cruciform DNA. The polypeptide is Holliday junction branch migration complex subunit RuvB (Prochlorococcus marinus (strain AS9601)).